A 171-amino-acid polypeptide reads, in one-letter code: Superoxide dismutase [Cu-Zn] 2 (171 aa).

An N-terminal signal peptide occupies residues 1-20 (MKKLSGVLAGSLLLISASFS). Cu cation contacts are provided by His67, His69, and His85. Cys74 and Cys167 are joined by a disulfide. 4 residues coordinate Zn(2+): His85, His93, His102, and Asp105. His147 is a Cu cation binding site.

Belongs to the Cu-Zn superoxide dismutase family. The cofactor is Cu cation. Requires Zn(2+) as cofactor.

The enzyme catalyses 2 superoxide + 2 H(+) = H2O2 + O2. Functionally, destroys radicals which are normally produced within the cells and which are toxic to biological systems. In Aquifex aeolicus (strain VF5), this protein is Superoxide dismutase [Cu-Zn] 2 (sodC2).